A 165-amino-acid polypeptide reads, in one-letter code: Shikimate kinase (165 aa).

Position 11–16 (11–16 (GAGKTT)) interacts with ATP. A Mg(2+)-binding site is contributed by Thr15. Substrate is bound by residues Asp33, Arg57, and Gly78. Residue Arg116 participates in ATP binding. Arg134 provides a ligand contact to substrate.

The protein belongs to the shikimate kinase family. As to quaternary structure, monomer. Mg(2+) is required as a cofactor.

It localises to the cytoplasm. The enzyme catalyses shikimate + ATP = 3-phosphoshikimate + ADP + H(+). It participates in metabolic intermediate biosynthesis; chorismate biosynthesis; chorismate from D-erythrose 4-phosphate and phosphoenolpyruvate: step 5/7. Functionally, catalyzes the specific phosphorylation of the 3-hydroxyl group of shikimic acid using ATP as a cosubstrate. The chain is Shikimate kinase from Bacillus mycoides (strain KBAB4) (Bacillus weihenstephanensis).